A 139-amino-acid polypeptide reads, in one-letter code: Hydrogenase maturation factor HypA (139 aa).

His-2 contacts Ni(2+). Zn(2+)-binding residues include Cys-75, Cys-78, Cys-111, and Cys-114.

Belongs to the HypA/HybF family.

Its function is as follows. Involved in the maturation of [NiFe] hydrogenases. Required for nickel insertion into the metal center of the hydrogenase. This chain is Hydrogenase maturation factor HypA, found in Ignicoccus hospitalis (strain KIN4/I / DSM 18386 / JCM 14125).